A 307-amino-acid chain; its full sequence is Phosphate import ATP-binding protein PstB (307 aa).

Residues M1–D30 form a disordered region. One can recognise an ABC transporter domain in the interval L48–I302. G80 to S87 is an ATP binding site.

The protein belongs to the ABC transporter superfamily. Phosphate importer (TC 3.A.1.7) family. The complex is composed of two ATP-binding proteins (PstB), two transmembrane proteins (PstC and PstA) and a solute-binding protein (PstS).

It localises to the cell membrane. The enzyme catalyses phosphate(out) + ATP + H2O = ADP + 2 phosphate(in) + H(+). Functionally, part of the ABC transporter complex PstSACB involved in phosphate import. Responsible for energy coupling to the transport system. This is Phosphate import ATP-binding protein PstB from Haloquadratum walsbyi (strain DSM 16790 / HBSQ001).